The primary structure comprises 171 residues: Co-chaperone protein HscB (171 aa).

In terms of domain architecture, J spans Asp-2–Leu-74.

It belongs to the HscB family. As to quaternary structure, interacts with HscA and stimulates its ATPase activity. Interacts with IscU.

Co-chaperone involved in the maturation of iron-sulfur cluster-containing proteins. Seems to help targeting proteins to be folded toward HscA. The sequence is that of Co-chaperone protein HscB from Salmonella arizonae (strain ATCC BAA-731 / CDC346-86 / RSK2980).